The following is a 147-amino-acid chain: MTVRQRRFAMVILVVIGVSIATGLGLKAFQENILFFYNPTQIMAGEVPTDTSIRVGGVVVNGSVKRESGNLDVQFDLTDMAQTVTVVYSGLLPDLFREGQGIVAMGKLGPNKVFEASEVLAKHDEEYMPPEVADSLAKTKANTEDKL.

The Cytoplasmic segment spans residues 1–7 (MTVRQRR). A helical; Signal-anchor for type II membrane protein transmembrane segment spans residues 8-28 (FAMVILVVIGVSIATGLGLKA). Topologically, residues 29 to 147 (FQENILFFYN…KTKANTEDKL (119 aa)) are periplasmic. Heme is bound by residues His123 and Tyr127.

It belongs to the CcmE/CycJ family.

It localises to the cell inner membrane. Its function is as follows. Heme chaperone required for the biogenesis of c-type cytochromes. Transiently binds heme delivered by CcmC and transfers the heme to apo-cytochromes in a process facilitated by CcmF and CcmH. In Nitrosococcus oceani (strain ATCC 19707 / BCRC 17464 / JCM 30415 / NCIMB 11848 / C-107), this protein is Cytochrome c-type biogenesis protein CcmE.